A 51-amino-acid polypeptide reads, in one-letter code: Insulin (51 aa).

Cystine bridges form between cysteine 7–cysteine 36, cysteine 19–cysteine 49, and cysteine 35–cysteine 40.

This sequence belongs to the insulin family. As to quaternary structure, heterodimer of a B chain and an A chain linked by two disulfide bonds.

The protein resides in the secreted. Its function is as follows. Insulin decreases blood glucose concentration. It increases cell permeability to monosaccharides, amino acids and fatty acids. It accelerates glycolysis, the pentose phosphate cycle, and glycogen synthesis in liver. This is Insulin (INS) from Myocastor coypus (Coypu).